The chain runs to 205 residues: MIKRPRRLRTNEVLRKAVRETRLSTDSLIWPLFIVEGKNIKKEISSLPGQYHFSPDMVGKAIEAALKADVKSVLLFGLPKHKDEKGSEAYNENGVLQQGIREIKQRYPQMQVITDICMCEYTSHGHCGILEGERVDNDRTLPYLEKIALSHVMAGADMIAPSDMMDGRIYALRSTLDKNGFTDIPIMSYAVKYASSFYGPFREAA.

Zn(2+)-binding residues include Cys-117, Cys-119, and Cys-127. The active-site Schiff-base intermediate with substrate is Lys-192. Arg-202 provides a ligand contact to substrate.

The protein belongs to the ALAD family. Homooctamer. Zn(2+) serves as cofactor.

It catalyses the reaction 2 5-aminolevulinate = porphobilinogen + 2 H2O + H(+). The protein operates within porphyrin-containing compound metabolism; protoporphyrin-IX biosynthesis; coproporphyrinogen-III from 5-aminolevulinate: step 1/4. Catalyzes an early step in the biosynthesis of tetrapyrroles. Binds two molecules of 5-aminolevulinate per subunit, each at a distinct site, and catalyzes their condensation to form porphobilinogen. The sequence is that of Delta-aminolevulinic acid dehydratase (hemB) from Ruminiclostridium josui (Clostridium josui).